Reading from the N-terminus, the 122-residue chain is Large ribosomal subunit protein uL14c (122 aa).

This sequence belongs to the universal ribosomal protein uL14 family. As to quaternary structure, part of the 50S ribosomal subunit.

It is found in the plastid. The protein localises to the chloroplast. In terms of biological role, binds to 23S rRNA. The polypeptide is Large ribosomal subunit protein uL14c (Platanus occidentalis (Sycamore)).